The primary structure comprises 248 residues: Carbohydrate deacetylase 2 (248 aa).

Residues His59 and His123 each coordinate Mg(2+).

This sequence belongs to the YdjC deacetylase family. Homodimer. It depends on Mg(2+) as a cofactor.

In terms of biological role, probably catalyzes the deacetylation of acetylated carbohydrates an important step in the degradation of oligosaccharides. This is Carbohydrate deacetylase 2 from Listeria innocua serovar 6a (strain ATCC BAA-680 / CLIP 11262).